Reading from the N-terminus, the 296-residue chain is UDP-N-acetylenolpyruvoylglucosamine reductase (296 aa).

Residues 26–191 form the FAD-binding PCMH-type domain; it reads RIGGPANYFK…LSATFRLSRN (166 aa). Arg-170 is a catalytic residue. Cys-218 (proton donor) is an active-site residue. The active site involves Glu-287.

Belongs to the MurB family. The cofactor is FAD.

It is found in the cytoplasm. The catalysed reaction is UDP-N-acetyl-alpha-D-muramate + NADP(+) = UDP-N-acetyl-3-O-(1-carboxyvinyl)-alpha-D-glucosamine + NADPH + H(+). It functions in the pathway cell wall biogenesis; peptidoglycan biosynthesis. In terms of biological role, cell wall formation. This Chlamydia abortus (strain DSM 27085 / S26/3) (Chlamydophila abortus) protein is UDP-N-acetylenolpyruvoylglucosamine reductase.